Here is a 513-residue protein sequence, read N- to C-terminus: Cytochrome P450 71D445 (513 aa).

The chain crosses the membrane as a helical; Signal-anchor for type II membrane protein span at residues 12–28 (SEWAITSTITLLFLILL). Heme is bound at residue Cys450.

The protein belongs to the cytochrome P450 family. It depends on heme as a cofactor. As to expression, expressed in mature seeds.

It localises to the membrane. It carries out the reaction (-)-casbene + reduced [NADPH--hemoprotein reductase] + O2 = 8-hydroxycasbene + oxidized [NADPH--hemoprotein reductase] + H2O + H(+). The catalysed reaction is 4-hydroxycasbene + reduced [NADPH--hemoprotein reductase] + O2 = 4,8-dihydroxycasbene + oxidized [NADPH--hemoprotein reductase] + H2O + H(+). It catalyses the reaction 4,8-dihydroxycasbene + reduced [NADPH--hemoprotein reductase] + O2 = 4,5,8-trihydroxycasbene + oxidized [NADPH--hemoprotein reductase] + H2O + H(+). Its pathway is secondary metabolite biosynthesis; terpenoid biosynthesis. Its function is as follows. Involved in the biosynthesis of macrocyclic lathyrane type diterpenoids (also called Euphorbia factors) natural products, including the cyclization route from casbene to jolkinol C, a precursor for ingenol mebutate that is used to treat actinic keratosis, a precancerous skin condition. Catalyzes the hydroxylation of (-)-casbene and 4-hydroxycasbene to produce 8-hydroxycasbene and 4,8-dihydroxycasbene, respectively. Also mediates the formation of 4-hydroxy-8-ketocasbene from 4,8-dihydroxycasbene. Together with ADH1, triggers the biosynthesis of 8-ketocasbene from 8-hydroxycasbene. This is Cytochrome P450 71D445 from Euphorbia lathyris (Caper spurge).